The chain runs to 96 residues: MALTREEVLKIAKLSKLSFEDKEIEKFQVELNDILKYIDMLNEVDTSKVEPLVYINESVNNFREKEEKPSLEIEKVLFNAPESAENAIVVPKVIGE.

This sequence belongs to the GatC family. Heterotrimer of A, B and C subunits.

The enzyme catalyses L-glutamyl-tRNA(Gln) + L-glutamine + ATP + H2O = L-glutaminyl-tRNA(Gln) + L-glutamate + ADP + phosphate + H(+). It carries out the reaction L-aspartyl-tRNA(Asn) + L-glutamine + ATP + H2O = L-asparaginyl-tRNA(Asn) + L-glutamate + ADP + phosphate + 2 H(+). Allows the formation of correctly charged Asn-tRNA(Asn) or Gln-tRNA(Gln) through the transamidation of misacylated Asp-tRNA(Asn) or Glu-tRNA(Gln) in organisms which lack either or both of asparaginyl-tRNA or glutaminyl-tRNA synthetases. The reaction takes place in the presence of glutamine and ATP through an activated phospho-Asp-tRNA(Asn) or phospho-Glu-tRNA(Gln). The polypeptide is Aspartyl/glutamyl-tRNA(Asn/Gln) amidotransferase subunit C (Fusobacterium nucleatum subsp. nucleatum (strain ATCC 25586 / DSM 15643 / BCRC 10681 / CIP 101130 / JCM 8532 / KCTC 2640 / LMG 13131 / VPI 4355)).